We begin with the raw amino-acid sequence, 373 residues long: SH3 domain-binding protein 5-like (373 aa).

The disordered stretch occupies residues 1–53 (MEGKEGPSCEVRLPTPGAEREGPIHPELGAFGETASNTIKLSESSNDGKKEEI). Residues 34-45 (TASNTIKLSESS) show a composition bias toward polar residues. Coiled-coil stretches lie at residues 55-98 (EELD…ESAR) and 170-272 (WQEM…SEEI). Disordered regions lie at residues 276 to 305 (RTQSSLLSQRAPPLGAEAPPSVKDGETGPP) and 344 to 373 (TGAVECGGSRERGGDRGTGGAFRHHRSVSL). A compositionally biased stretch (basic and acidic residues) spans 344-358 (TGAVECGGSRERGGD).

The protein belongs to the SH3BP5 family.

Functions as a guanine nucleotide exchange factor (GEF) for rab11a. This chain is SH3 domain-binding protein 5-like (sh3bp5l), found in Xenopus tropicalis (Western clawed frog).